A 115-amino-acid chain; its full sequence is Large ribosomal subunit protein P2 (115 aa).

Met-1 carries the N-acetylmethionine modification. 2 positions are modified to phosphoserine: Ser-17 and Ser-19. Residue Lys-21 is modified to N6-acetyllysine; alternate. N6-succinyllysine; alternate is present on Lys-21. Low complexity predominate over residues 78–90; it reads GSAAPAAGSAPAA. The interval 78–115 is disordered; that stretch reads GSAAPAAGSAPAAAEEKKDEKKEESEESDDDMGFGLFD. Residues Ser-79 and Ser-86 each carry the phosphoserine modification. Positions 91-101 are enriched in basic and acidic residues; sequence AEEKKDEKKEE. 2 positions are modified to phosphoserine: Ser-102 and Ser-105.

The protein belongs to the eukaryotic ribosomal protein P1/P2 family. Heterodimer with P1 at the lateral ribosomal stalk of the large ribosomal subunit.

In terms of biological role, plays an important role in the elongation step of protein synthesis. This Homo sapiens (Human) protein is Large ribosomal subunit protein P2 (RPLP2).